Here is a 268-residue protein sequence, read N- to C-terminus: Ribonuclease P protein subunit p30 (268 aa).

A2 bears the N-acetylalanine mark. A Phosphoserine modification is found at S251.

It belongs to the eukaryotic/archaeal RNase P protein component 3 family. Component of nuclear RNase P and RNase MRP ribonucleoproteins. RNase P consists of a catalytic RNA moiety and about 10 protein subunits; POP1, POP4, POP5, POP7, RPP14, RPP21, RPP25, RPP30, RPP38 and RPP40. Within the RNase P complex, POP1, POP7 and RPP25 form the 'finger' subcomplex, POP5, RPP14, RPP40 and homodimeric RPP30 form the 'palm' subcomplex, and RPP21, POP4 and RPP38 form the 'wrist' subcomplex. All subunits of the RNase P complex interact with the catalytic RNA. Several subunits of RNase P are also part of the RNase MRP complex. RNase MRP consists of a catalytic RNA moiety and about 8 protein subunits; POP1, POP7, RPP25, RPP30, RPP38, RPP40 and possibly also POP4 and POP5.

It localises to the nucleus. The protein resides in the nucleolus. Its function is as follows. Component of ribonuclease P, a ribonucleoprotein complex that generates mature tRNA molecules by cleaving their 5'-ends. Also a component of the MRP ribonuclease complex, which cleaves pre-rRNA sequences. The chain is Ribonuclease P protein subunit p30 (RPP30) from Bos taurus (Bovine).